We begin with the raw amino-acid sequence, 271 residues long: ATP synthase subunit a (271 aa).

The next 5 membrane-spanning stretches (helical) occupy residues threonine 40–phenylalanine 60, leucine 100–leucine 120, aspartate 146–isoleucine 166, leucine 220–proline 240, and alanine 242–valine 262.

It belongs to the ATPase A chain family. As to quaternary structure, F-type ATPases have 2 components, CF(1) - the catalytic core - and CF(0) - the membrane proton channel. CF(1) has five subunits: alpha(3), beta(3), gamma(1), delta(1), epsilon(1). CF(0) has three main subunits: a(1), b(2) and c(9-12). The alpha and beta chains form an alternating ring which encloses part of the gamma chain. CF(1) is attached to CF(0) by a central stalk formed by the gamma and epsilon chains, while a peripheral stalk is formed by the delta and b chains.

The protein resides in the cell inner membrane. Functionally, key component of the proton channel; it plays a direct role in the translocation of protons across the membrane. This is ATP synthase subunit a from Shigella flexneri.